Here is a 311-residue protein sequence, read N- to C-terminus: Probable manganese-dependent inorganic pyrophosphatase (311 aa).

Residues histidine 9, aspartate 13, aspartate 15, aspartate 77, histidine 99, and aspartate 151 each coordinate Mn(2+).

The protein belongs to the PPase class C family. The cofactor is Mn(2+).

The protein resides in the cytoplasm. The catalysed reaction is diphosphate + H2O = 2 phosphate + H(+). The protein is Probable manganese-dependent inorganic pyrophosphatase of Streptococcus pneumoniae (strain JJA).